The primary structure comprises 117 residues: UPF0102 protein RSKD131_0118 (117 aa).

This sequence belongs to the UPF0102 family.

This chain is UPF0102 protein RSKD131_0118, found in Cereibacter sphaeroides (strain KD131 / KCTC 12085) (Rhodobacter sphaeroides).